Here is a 125-residue protein sequence, read N- to C-terminus: Phosphoribosyl-AMP cyclohydrolase (125 aa).

Asp-74 is a Mg(2+) binding site. A Zn(2+)-binding site is contributed by Cys-75. Positions 76 and 78 each coordinate Mg(2+). The Zn(2+) site is built by Cys-92 and Cys-99.

It belongs to the PRA-CH family. As to quaternary structure, homodimer. The cofactor is Mg(2+). Zn(2+) is required as a cofactor.

Its subcellular location is the cytoplasm. The enzyme catalyses 1-(5-phospho-beta-D-ribosyl)-5'-AMP + H2O = 1-(5-phospho-beta-D-ribosyl)-5-[(5-phospho-beta-D-ribosylamino)methylideneamino]imidazole-4-carboxamide. The protein operates within amino-acid biosynthesis; L-histidine biosynthesis; L-histidine from 5-phospho-alpha-D-ribose 1-diphosphate: step 3/9. Its function is as follows. Catalyzes the hydrolysis of the adenine ring of phosphoribosyl-AMP. In Geotalea uraniireducens (strain Rf4) (Geobacter uraniireducens), this protein is Phosphoribosyl-AMP cyclohydrolase.